A 473-amino-acid polypeptide reads, in one-letter code: Photosystem II CP43 reaction center protein (473 aa).

Positions 1 to 14 (MKTLYSLRRFYHVE) are excised as a propeptide. An N-acetylthreonine modification is found at T15. Position 15 is a phosphothreonine (T15). Transmembrane regions (helical) follow at residues 69–93 (LFEV…PHLA), 134–155 (LLGP…KDRN), 178–200 (KALY…RKIT), 255–275 (KPFA…LSYS), and 291–312 (WFNN…ASQA). [CaMn4O5] cluster is bound at residue E367. Residues 447–471 (RARAAAAGFEKGIDRDFEPVLSMTP) traverse the membrane as a helical segment.

This sequence belongs to the PsbB/PsbC family. PsbC subfamily. PSII is composed of 1 copy each of membrane proteins PsbA, PsbB, PsbC, PsbD, PsbE, PsbF, PsbH, PsbI, PsbJ, PsbK, PsbL, PsbM, PsbT, PsbX, PsbY, PsbZ, Psb30/Ycf12, at least 3 peripheral proteins of the oxygen-evolving complex and a large number of cofactors. It forms dimeric complexes. Binds multiple chlorophylls and provides some of the ligands for the Ca-4Mn-5O cluster of the oxygen-evolving complex. It may also provide a ligand for a Cl- that is required for oxygen evolution. PSII binds additional chlorophylls, carotenoids and specific lipids. serves as cofactor.

It is found in the plastid. It localises to the chloroplast thylakoid membrane. In terms of biological role, one of the components of the core complex of photosystem II (PSII). It binds chlorophyll and helps catalyze the primary light-induced photochemical processes of PSII. PSII is a light-driven water:plastoquinone oxidoreductase, using light energy to abstract electrons from H(2)O, generating O(2) and a proton gradient subsequently used for ATP formation. This is Photosystem II CP43 reaction center protein from Draba nemorosa (Woodland whitlowgrass).